The following is a 335-amino-acid chain: Eukaryotic translation initiation factor 3 subunit I (335 aa).

WD repeat units lie at residues 8–47 (GHER…RLGT), 50–91 (GHQG…KVWD), 145–184 (CTES…QLEN), 189–228 (EFDN…ILKT), and 286–325 (GHFG…FDFM).

It belongs to the eIF-3 subunit I family. As to quaternary structure, component of the eukaryotic translation initiation factor 3 (eIF-3) complex.

It is found in the cytoplasm. Component of the eukaryotic translation initiation factor 3 (eIF-3) complex, which is involved in protein synthesis of a specialized repertoire of mRNAs and, together with other initiation factors, stimulates binding of mRNA and methionyl-tRNAi to the 40S ribosome. The eIF-3 complex specifically targets and initiates translation of a subset of mRNAs involved in cell proliferation. The protein is Eukaryotic translation initiation factor 3 subunit I (tif34) of Aspergillus oryzae (strain ATCC 42149 / RIB 40) (Yellow koji mold).